The primary structure comprises 283 residues: Glutamate racemase (283 aa).

Substrate contacts are provided by residues 13–14 and 45–46; these read DS and YG. The Proton donor/acceptor role is filled by Cys-76. 77–78 is a binding site for substrate; sequence NT. Cys-186 functions as the Proton donor/acceptor in the catalytic mechanism. Residue 187-188 coordinates substrate; sequence TH.

It belongs to the aspartate/glutamate racemases family.

It carries out the reaction L-glutamate = D-glutamate. It functions in the pathway cell wall biogenesis; peptidoglycan biosynthesis. Provides the (R)-glutamate required for cell wall biosynthesis. The sequence is that of Glutamate racemase from Microcystis aeruginosa (strain NIES-843 / IAM M-2473).